We begin with the raw amino-acid sequence, 1024 residues long: Beta-galactosidase (1024 aa).

Residues Asn103 and Asp202 each coordinate substrate. Asp202 contacts Na(+). The Mg(2+) site is built by Glu417, His419, and Glu462. Substrate-binding positions include Glu462 and 538–541 (EYAH). Residue Glu462 is the Proton donor of the active site. Glu538 serves as the catalytic Nucleophile. Residue Asn598 participates in Mg(2+) binding. 2 residues coordinate Na(+): Phe602 and Asn605. Residues Asn605 and Trp1000 each coordinate substrate.

The protein belongs to the glycosyl hydrolase 2 family. In terms of assembly, homotetramer. The cofactor is Mg(2+). Requires Na(+) as cofactor.

The catalysed reaction is Hydrolysis of terminal non-reducing beta-D-galactose residues in beta-D-galactosides.. The polypeptide is Beta-galactosidase (Escherichia coli O6:H1 (strain CFT073 / ATCC 700928 / UPEC)).